A 150-amino-acid chain; its full sequence is MKVIFLQDVKGKGKKGEVKEVPTGYAQNFLLKKNLAKEATTQAIGELKGKQKSEEKAQAEILAQAQELKTQLESETTRVQFIEKVGPDGRTFGSITAKKIAEELQKQYGIKIDKRHIDLDHTIRAIGKVEVPVKLHKQVSSQIKLDIKEA.

It belongs to the bacterial ribosomal protein bL9 family.

Functionally, binds to the 23S rRNA. The protein is Large ribosomal subunit protein bL9 of Streptococcus agalactiae serotype Ia (strain ATCC 27591 / A909 / CDC SS700).